A 198-amino-acid chain; its full sequence is Glycerol-3-phosphate acyltransferase (198 aa).

A run of 5 helical transmembrane segments spans residues 2–22 (IIVI…TGYL), 55–75 (MITQ…CMLI), 88–108 (YLSI…FLGF), 118–138 (VGAF…VYFV), and 162–182 (IALR…GLLI).

It belongs to the PlsY family. In terms of assembly, probably interacts with PlsX.

The protein resides in the cell membrane. It catalyses the reaction an acyl phosphate + sn-glycerol 3-phosphate = a 1-acyl-sn-glycero-3-phosphate + phosphate. Its pathway is lipid metabolism; phospholipid metabolism. Its function is as follows. Catalyzes the transfer of an acyl group from acyl-phosphate (acyl-PO(4)) to glycerol-3-phosphate (G3P) to form lysophosphatidic acid (LPA). This enzyme utilizes acyl-phosphate as fatty acyl donor, but not acyl-CoA or acyl-ACP. This is Glycerol-3-phosphate acyltransferase from Clostridium acetobutylicum (strain ATCC 824 / DSM 792 / JCM 1419 / IAM 19013 / LMG 5710 / NBRC 13948 / NRRL B-527 / VKM B-1787 / 2291 / W).